Consider the following 316-residue polypeptide: MTKRDQSLATPYLQFDRTQWAALRDSVPLTLTEEEIVKLKGINEDLSLDEVAQIYLPLSRLLNFYISSNLRRQAVLEQFLGTDGQRIPYVIGIAGSVAVGKSTTARLLQALLSRWPEHRSVELITTDGFLYPNKVLNERGLMKKKGFPQSYDMHSLVKFVSEVKSGADHVTAPVYSHLIYDIVPDGNKIIKQPDILILEGLNVLQSGMDYPHDPHHVFVSDFVDFSIYVDAPEDLLQSWYINRFLKFRQGAFSNPDSYFHNYAKLPETEAVKIATQLWKEINGLNLKQNILPTRERASLIMTKSANHAVESVRLRK.

95–102 lines the ATP pocket; sequence GSVAVGKS.

It belongs to the prokaryotic pantothenate kinase family.

The protein localises to the cytoplasm. The enzyme catalyses (R)-pantothenate + ATP = (R)-4'-phosphopantothenate + ADP + H(+). It functions in the pathway cofactor biosynthesis; coenzyme A biosynthesis; CoA from (R)-pantothenate: step 1/5. This chain is Pantothenate kinase, found in Yersinia enterocolitica serotype O:8 / biotype 1B (strain NCTC 13174 / 8081).